Consider the following 319-residue polypeptide: MSTDISPPYSQTHVEPVNGYPSDNKRCDDSSVPAKYDDLVRNSALFWEKLRAFLGLTSKTLKVPTVGGNTLDLHRLFIEVTSRGGIERVVKDRKWKEVIGAFSFPTTITSASFVLRKYYLKFLFQLEHVYYLEKPVSSLQSTDEALKSLANESPNPEEGIDEPQVGYEVQGFIDGKFDSGYLVTMKLGSQELKGVLYHIPQTPSQSQQTMETPSAIVQSSQRRHRKKSKLAVVDTQKPKCHRSGYNFFFAEQYARLKPEYHGQERSITKKIGHMWSNLTESEKQVYQDKGVKDVERYRIEMLEYKSSHESGATASTVAQ.

Residues methionine 1 to histidine 13 show a composition bias toward polar residues. The interval methionine 1–lysine 25 is disordered. The region spanning valine 40–tyrosine 131 is the ARID domain. Polar residues predominate over residues proline 203–serine 220. A disordered region spans residues proline 203–leucine 230. A DNA-binding region (HMG box) is located at residues proline 238–lysine 305.

Ubiquitously expressed.

It localises to the nucleus. Binds preferentially DNA with A/T-rich content. The polypeptide is High mobility group B protein 10 (HMGB10) (Arabidopsis thaliana (Mouse-ear cress)).